The following is a 258-amino-acid chain: Undecaprenyl-diphosphatase (258 aa).

8 consecutive transmembrane segments (helical) span residues Met-1 to Val-21, Leu-42 to Phe-62, Phe-69 to Ala-89, Phe-96 to Val-116, Val-135 to Thr-155, Glu-173 to Tyr-193, Ile-211 to Leu-231, and Phe-237 to Ile-257.

This sequence belongs to the UppP family.

Its subcellular location is the cell inner membrane. It carries out the reaction di-trans,octa-cis-undecaprenyl diphosphate + H2O = di-trans,octa-cis-undecaprenyl phosphate + phosphate + H(+). Catalyzes the dephosphorylation of undecaprenyl diphosphate (UPP). Confers resistance to bacitracin. The sequence is that of Undecaprenyl-diphosphatase from Campylobacter fetus subsp. fetus (strain 82-40).